We begin with the raw amino-acid sequence, 277 residues long: 2-dehydro-3-deoxyphosphooctonate aldolase (277 aa).

It belongs to the KdsA family.

The protein localises to the cytoplasm. It catalyses the reaction D-arabinose 5-phosphate + phosphoenolpyruvate + H2O = 3-deoxy-alpha-D-manno-2-octulosonate-8-phosphate + phosphate. The protein operates within carbohydrate biosynthesis; 3-deoxy-D-manno-octulosonate biosynthesis; 3-deoxy-D-manno-octulosonate from D-ribulose 5-phosphate: step 2/3. It participates in bacterial outer membrane biogenesis; lipopolysaccharide biosynthesis. The protein is 2-dehydro-3-deoxyphosphooctonate aldolase of Dichelobacter nodosus (strain VCS1703A).